The sequence spans 624 residues: DNA-directed RNA polymerase III subunit rpc-3 (624 aa).

2 disordered regions span residues 229-260 (KRKL…EEDL) and 373-418 (LAPK…ARMS). Over residues 385–403 (DDSDDDEEDGDYSDSDEEM) the composition is skewed to acidic residues. The leucine-zipper stretch occupies residues 551 to 572 (CYATMVHCLQVLEVRRQKDKDV).

The protein belongs to the RNA polymerase beta chain family. As to quaternary structure, component of the RNA polymerase III (Pol III) complex consisting of 17 subunits.

The protein localises to the nucleus. DNA-dependent RNA polymerase catalyzes the transcription of DNA into RNA using the four ribonucleoside triphosphates as substrates. Specific core component of RNA polymerase III which synthesizes small RNAs, such as 5S rRNA and tRNAs. This Neurospora crassa (strain ATCC 24698 / 74-OR23-1A / CBS 708.71 / DSM 1257 / FGSC 987) protein is DNA-directed RNA polymerase III subunit rpc-3 (rpc-82).